A 289-amino-acid polypeptide reads, in one-letter code: MKKSVRSPGSATVINAIATGFGAAFGIGLDIKCCANTQNSSITCSNDVGAPTTLMEICAKKTFEKYGISSDDFGMNFKTESELPMASGLSSSSALSNAVVSISSKIIAEEFNLMPLDDLEIINLAIDASLEAKVTITGSFDDATASYFGGVVVTDNKNRKFIIKEKMEEYPVLVYMPNFGSKSGSSDVGRMKVLSPLVETAFGLARSGDYFKALNLNGLIYANTLGFDSNIAIDALEVGAIASGLSGTGSSFVAICEDEAIDDIKETWSKYEGRVIETKVDNIGCQFIG.

Position 84 to 94 (84 to 94 (PMASGLSSSSA)) interacts with ATP.

The protein belongs to the GHMP kinase family. Archaeal shikimate kinase subfamily.

The protein localises to the cytoplasm. It catalyses the reaction shikimate + ATP = 3-phosphoshikimate + ADP + H(+). It functions in the pathway metabolic intermediate biosynthesis; chorismate biosynthesis; chorismate from D-erythrose 4-phosphate and phosphoenolpyruvate: step 5/7. In Methanobrevibacter smithii (strain ATCC 35061 / DSM 861 / OCM 144 / PS), this protein is Shikimate kinase.